Here is a 128-residue protein sequence, read N- to C-terminus: CD59 glycoprotein (128 aa).

The signal sequence occupies residues 1–25; it reads MGIQGGSVLFGLLLILAVFCHSGHS. The UPAR/Ly6 domain occupies 26-108; the sequence is LQCYSCPYST…ILENGGTTLS (83 aa). 5 disulfides stabilise this stretch: C28/C51, C31/C38, C44/C64, C70/C88, and C89/C94. N43 is a glycosylation site (N-linked (GlcNAc...) asparagine). A lipid anchor (GPI-anchor amidated asparagine) is attached at N102. Residues 103–128 constitute a propeptide, removed in mature form; sequence GGTTLSKKTVLLLVTPFLAAAWSLHP.

Interacts with T-cell surface antigen CD2. In terms of processing, N- and O-glycosylated.

It localises to the cell membrane. It is found in the secreted. Its function is as follows. Potent inhibitor of the complement membrane attack complex (MAC) action, which protects self-cells from damage during complement activation. Acts by binding to the beta-haipins of C8 (C8A and C8B) components of the assembling MAC, forming an intermolecular beta-sheet that prevents incorporation of the multiple copies of C9 required for complete formation of the osmolytic pore. This chain is CD59 glycoprotein, found in Callithrix sp. (Marmoset).